A 309-amino-acid chain; its full sequence is MGNAWSLISQMFPPKPKWSVNDIPDLTGKVVIVTGGNTGCGKETVKALLAHGAKVYLAARSEEKAKEAITKLKEETGAEAIFLSLDLADLVSVRRGAEEFLSKEKQLHILFNNAGVMLAPMDMLTKQGYDLQFGTNVIGHFHFTQLLLPALLAAATPTEKARVITTSSSANYMGTLDFNVWKDSPARSKKASGDLYVQSKHGNVVFAVELARRYGEQNIISHSLNPGSIRTDLQRHLSPFANKMQDVFLFPADMGALTQLWAGTSPEAGKLNGEFMIPWARLGKARKETGDPAVGKKLWEWLELQCKDY.

NADP(+)-binding residues include Lys64, Asp86, and Asn113. Ser167 (proton donor) is an active-site residue. Tyr196 and Lys200 together coordinate NADP(+). Tyr196 acts as the Proton acceptor in catalysis. Lys200 serves as the catalytic Lowers pKa of active site Tyr.

It belongs to the short-chain dehydrogenases/reductases (SDR) family.

Its pathway is secondary metabolite biosynthesis. Functionally, short-chain dehydrogenase/reductase, part of the gene cluster that mediates the biosynthesis of melleolides, a range of antifungal and phytotoxic polyketide derivatives composed of an orsellinic acid (OA) moiety esterified to various sesquiterpene alcohols. The first step in melleolides biosynthesis is performed by the delta(6)-protoilludene synthase PRO1 which catalyzes the cyclization of farnesyl diphosphate to protoilludene. The orsellinic acid synthase armB produces OA by condensing acetyl-CoA with 3 malonyl-CoA units in a three-round chain elongation reaction folowed by a C2-C7 ring closure. ArmB further catalyzes the trans-esterification of OA to the various sesquiterpene alcohols resulting from the hydroxylation of protoilludene. The melleolides cluster also includes 5 cytochrome P450 monooxygenases, 4 NAD(+)-dependent oxidoreductases, one flavin-dependent oxidoreductase, and one O-methyltransferase. The cytochrome P450 monooxygenases may be involved in protoilludene hydroxylation to elaborate melleolides with multiple alcohol groups, such as melleolide D, which carries alcohol functionalities at C-4, C-5, C-10, and C-13. The role of the NAD(+)-dependent enzymes remains unknown. Numerous melleolides, including arnamial, show 5'-O-methylation of the aromatic moiety which may be catalyzed by the methyltransferase encoded in the cluster. The flavin-dependent oxidoreductase might represent the dehydrogenase yielding the aldehyde in position 1 of arnamial and other melleolides. Finally, several halogenase localized outside of the cluster, are able to catalyze the transfer of a single chlorine atom to the melleolide backbone, resulting in a 6'-chloromelleolide product. This is Short-chain dehydrogenase/reductase ARMGADRAFT_1018437 from Armillaria gallica (Bulbous honey fungus).